A 185-amino-acid chain; its full sequence is Large ribosomal subunit protein uL5 (185 aa).

It belongs to the universal ribosomal protein uL5 family. Part of the 50S ribosomal subunit; part of the 5S rRNA/L5/L18/L25 subcomplex. Contacts the 5S rRNA and the P site tRNA. Forms a bridge to the 30S subunit in the 70S ribosome.

Functionally, this is one of the proteins that bind and probably mediate the attachment of the 5S RNA into the large ribosomal subunit, where it forms part of the central protuberance. In the 70S ribosome it contacts protein S13 of the 30S subunit (bridge B1b), connecting the 2 subunits; this bridge is implicated in subunit movement. Contacts the P site tRNA; the 5S rRNA and some of its associated proteins might help stabilize positioning of ribosome-bound tRNAs. In Bradyrhizobium sp. (strain BTAi1 / ATCC BAA-1182), this protein is Large ribosomal subunit protein uL5.